The following is a 237-amino-acid chain: Oil body-associated protein 2C (237 aa).

Belongs to the OBAP family.

This is Oil body-associated protein 2C from Arabidopsis thaliana (Mouse-ear cress).